The following is a 246-amino-acid chain: MLINRNIVALFALPFMASATASELSIGAGAAYNESPYRGYNENTKAIPLISYEGDSFYVRQTTLGFILSQSEKNELSLTASWMPLEFDPADNDDYAMQQLDKRDSTAMAGVAWYHHERWGTVKASAAADVLDNSNGWVGELSVFHKMQIGRLSLTPALGVLYYDENFSDYYYGISESESRRSGLASYSAQDAWVPYVSLTAKYPIGEHVVLMASAGYSELPEEITDSPMIDRNESFTFVTGVSWRF.

The first 21 residues, 1 to 21 (MLINRNIVALFALPFMASATA), serve as a signal peptide directing secretion.

Belongs to the MipA/OmpV family.

Its subcellular location is the cell outer membrane. This is Putative outer membrane protein YiaT (yiaT) from Escherichia coli O157:H7.